The chain runs to 310 residues: Vomeronasal type-1 receptor 97 (310 aa).

The Extracellular portion of the chain corresponds to 1-19 (MNKDNILHTDTNIKITLFS). Residues 20–40 (EVSIGISANSALFFSHLFMLF) traverse the membrane as a helical segment. The Cytoplasmic portion of the chain corresponds to 41-49 (EKNRSKPID). The helical transmembrane segment at 50–70 (LYIAFLSLTQLMLLITIGLIA) threads the bilayer. The Extracellular portion of the chain corresponds to 71 to 93 (ADMFMSRGRWDSTTCQSLIYLHR). C85 and C172 are oxidised to a cystine. The helical transmembrane segment at 94–114 (LLRGFTLCATCLLNVLWTITL) threads the bilayer. The Cytoplasmic portion of the chain corresponds to 115–131 (SPRSSCLTTFKHKSPHH). Residues 132–152 (ISGAFLFFCVLYISFGSHLFL) form a helical membrane-spanning segment. Topologically, residues 153 to 190 (STIATPNLTSDNFMYVTQSCSFLPMSYSRTSMFSTPMA) are extracellular. Residue N159 is glycosylated (N-linked (GlcNAc...) asparagine). The chain crosses the membrane as a helical span at residues 191-211 (IREALLIGLIGLSSGYMVAFL). At 212 to 238 (WRHKNQARHLHSTSLSSKVSPEQRATR) the chain is on the cytoplasmic side. Residues 239–259 (TIMILMSFFVVLYILENVVFY) form a helical membrane-spanning segment. The Extracellular portion of the chain corresponds to 260–269 (SRMTFKDGSM). A helical transmembrane segment spans residues 270-290 (FYCVQIIVSHSYATISPFVFI). At 291 to 310 (CTEKRIIKLWGSMSSRIVSI) the chain is on the cytoplasmic side.

This sequence belongs to the G-protein coupled receptor 1 family. Expressed in 1-4% of neurons of the vomeronasal organ. Only one pheromone receptor gene may be expressed in a particular neuron. Not expressed in the main olfactory epithelium.

Its subcellular location is the cell membrane. Functionally, putative pheromone receptor implicated in the regulation of social as well as reproductive behavior. The polypeptide is Vomeronasal type-1 receptor 97 (Vom1r97) (Rattus norvegicus (Rat)).